The following is a 371-amino-acid chain: 4-hydroxy-3-methylbut-2-en-1-yl diphosphate synthase (flavodoxin) (371 aa).

The [4Fe-4S] cluster site is built by cysteine 270, cysteine 273, cysteine 305, and glutamate 312.

This sequence belongs to the IspG family. [4Fe-4S] cluster is required as a cofactor.

It catalyses the reaction (2E)-4-hydroxy-3-methylbut-2-enyl diphosphate + oxidized [flavodoxin] + H2O + 2 H(+) = 2-C-methyl-D-erythritol 2,4-cyclic diphosphate + reduced [flavodoxin]. Its pathway is isoprenoid biosynthesis; isopentenyl diphosphate biosynthesis via DXP pathway; isopentenyl diphosphate from 1-deoxy-D-xylulose 5-phosphate: step 5/6. Converts 2C-methyl-D-erythritol 2,4-cyclodiphosphate (ME-2,4cPP) into 1-hydroxy-2-methyl-2-(E)-butenyl 4-diphosphate. This chain is 4-hydroxy-3-methylbut-2-en-1-yl diphosphate synthase (flavodoxin), found in Shewanella frigidimarina (strain NCIMB 400).